A 182-amino-acid polypeptide reads, in one-letter code: Dephospho-CoA kinase (182 aa).

Residues 4–182 (VVAITGGIGS…IINNDHKIMT (179 aa)) form the DPCK domain. 12–17 (GSGKTT) serves as a coordination point for ATP.

The protein belongs to the CoaE family.

The protein localises to the cytoplasm. It carries out the reaction 3'-dephospho-CoA + ATP = ADP + CoA + H(+). The protein operates within cofactor biosynthesis; coenzyme A biosynthesis; CoA from (R)-pantothenate: step 5/5. Catalyzes the phosphorylation of the 3'-hydroxyl group of dephosphocoenzyme A to form coenzyme A. The polypeptide is Dephospho-CoA kinase (Aliivibrio fischeri (strain ATCC 700601 / ES114) (Vibrio fischeri)).